Consider the following 246-residue polypeptide: MNNVIPLQNSPERVSLLPIAPGVDFATALSLRRMATSTGATPAYLLAPEVSALLFYMPDQRHHMLFATLWNTGMRIGEARIVTPESFDLDGVRPFVRVLSEKVRARRGRPPKDEVRLVPLTDISYVRQMESWMITTRPRRREPLWAVTDETMRNWLKQAVRRAEADGVHFSISVTPHTFRHSYIMHMLYHRQPRKVIQALAGHRDPRSMEVYTRVFALDMAATLAVPFTGDGRDAAEILRTLPPLK.

The region spanning 40 to 225 is the Tyr recombinase domain; that stretch reads ATPAYLLAPE…FALDMAATLA (186 aa). Catalysis depends on residues Arg-75, Lys-102, His-177, Arg-180, and His-203. Tyr-212 acts as the O-(3'-phospho-DNA)-tyrosine intermediate in catalysis.

Belongs to the 'phage' integrase family.

The polypeptide is Probable site-specific recombinase in afa region (int) (Escherichia coli).